We begin with the raw amino-acid sequence, 185 residues long: Elongation factor P (185 aa).

This sequence belongs to the elongation factor P family.

Its subcellular location is the cytoplasm. It participates in protein biosynthesis; polypeptide chain elongation. In terms of biological role, involved in peptide bond synthesis. Stimulates efficient translation and peptide-bond synthesis on native or reconstituted 70S ribosomes in vitro. Probably functions indirectly by altering the affinity of the ribosome for aminoacyl-tRNA, thus increasing their reactivity as acceptors for peptidyl transferase. The sequence is that of Elongation factor P (efp) from Nostoc sp. (strain PCC 7120 / SAG 25.82 / UTEX 2576).